Consider the following 236-residue polypeptide: Small ribosomal subunit protein uS2c (236 aa).

This sequence belongs to the universal ribosomal protein uS2 family.

It is found in the plastid. The protein localises to the chloroplast. The chain is Small ribosomal subunit protein uS2c (rps2) from Crucihimalaya wallichii (Rock-cress).